The following is a 139-amino-acid chain: Holo-[acyl-carrier-protein] synthase (139 aa).

Mg(2+)-binding residues include Asp-8 and Glu-61.

It belongs to the P-Pant transferase superfamily. AcpS family. Mg(2+) serves as cofactor.

Its subcellular location is the cytoplasm. The enzyme catalyses apo-[ACP] + CoA = holo-[ACP] + adenosine 3',5'-bisphosphate + H(+). In terms of biological role, transfers the 4'-phosphopantetheine moiety from coenzyme A to a Ser of acyl-carrier-protein. The protein is Holo-[acyl-carrier-protein] synthase of Rhodopseudomonas palustris (strain BisA53).